The sequence spans 201 residues: Potassium-transporting ATPase KdpC subunit (201 aa).

A helical membrane pass occupies residues 7–29 (PALVLLTALTAITGLAYPLAMTG).

It belongs to the KdpC family. In terms of assembly, the system is composed of three essential subunits: KdpA, KdpB and KdpC.

The protein resides in the cell inner membrane. In terms of biological role, part of the high-affinity ATP-driven potassium transport (or Kdp) system, which catalyzes the hydrolysis of ATP coupled with the electrogenic transport of potassium into the cytoplasm. This subunit acts as a catalytic chaperone that increases the ATP-binding affinity of the ATP-hydrolyzing subunit KdpB by the formation of a transient KdpB/KdpC/ATP ternary complex. This Methylobacterium radiotolerans (strain ATCC 27329 / DSM 1819 / JCM 2831 / NBRC 15690 / NCIMB 10815 / 0-1) protein is Potassium-transporting ATPase KdpC subunit.